Consider the following 751-residue polypeptide: MAFRTICVLVGVFICSICVKGSSQPQARVYLTFDELRETKTSEYFSLSHHPLDYRILLMDEDQDRIYVGSKDHILSLNINNISQEALSVFWPASTIKVEECKMAGKDPTHGCGNFVRVIQTFNRTHLYVCGSGAFSPVCTYLNRGRRSEDQVFMIDSKCESGKGRCSFNPNVNTVSVMINEELFSGMYIDFMGTDAAIFRSLTKRNAVRTDQHNSKWLSEPMFVDAHVIPDGTDPNDAKVYFFFKEKLTDNNRSTKQIHSMIARICPNDTGGLRSLVNKWTTFLKARLVCSVTDEDGPETHFDELEDVFLLETDNPRTTLVYGIFTTSSSVFKGSAVCVYHLSDIQTVFNGPFAHKEGPNHQLISYQGRIPYPRPGTCPGGAFTPNMRTTKEFPDDVVTFIRNHPLMYNSIYPIHKRPLIVRIGTDYKYTKIAVDRVNAADGRYHVLFLGTDRGTVQKVVVLPTNNSVSGELILEELEVFKNHAPITTMKISSKKQQLYVSSNEGVSQVSLHRCHIYGTACADCCLARDPYCAWDGHSCSRFYPTGKRRSRRQDVRHGNPLTQCRGFNLKAYRNAAEIVQYGVKNNTTFLECAPKSPQASIKWLLQKDKDRRKEVKLNERIIATSQGLLIRSVQGSDQGLYHCIATENSFKQTIAKINFKVLDSEMVAVVTDKWSPWTWASSVRALPFHPKDIMGAFSHSEMQMINQYCKDTRQQHQQGDESQKMRGDYGKLKALINSRKSRNRRNQLPES.

Residues 1–20 form the signal peptide; it reads MAFRTICVLVGVFICSICVK. The 484-residue stretch at 28-511 folds into the Sema domain; sequence RVYLTFDELR…SNEGVSQVSL (484 aa). The N-linked (GlcNAc...) asparagine glycan is linked to Asn-81. Cys-101 and Cys-112 are joined by a disulfide. Asn-123 is a glycosylation site (N-linked (GlcNAc...) asparagine). The cysteines at positions 130 and 139 are disulfide-linked. N-linked (GlcNAc...) asparagine glycosylation is found at Asn-252 and Asn-268. 2 cysteine pairs are disulfide-bonded: Cys-266/Cys-378 and Cys-290/Cys-338. Residue Asn-465 is glycosylated (N-linked (GlcNAc...) asparagine). A disulfide bridge connects residues Cys-514 and Cys-532. The Ig-like C2-type domain maps to 571–655; the sequence is AYRNAAEIVQ…TENSFKQTIA (85 aa). N-linked (GlcNAc...) asparagine glycans are attached at residues Asn-585 and Asn-586. Cys-643 and Cys-709 form a disulfide bridge. Residues 712 to 731 are compositionally biased toward basic and acidic residues; the sequence is TRQQHQQGDESQKMRGDYGK. The tract at residues 712–751 is disordered; that stretch reads TRQQHQQGDESQKMRGDYGKLKALINSRKSRNRRNQLPES.

It belongs to the semaphorin family. In terms of assembly, interacts with PLXND1. In terms of tissue distribution, expressed intensely in the heart, skeletal muscle, colon, small intestine, ovary, testis, and prostate. Faint expression ubiquitously among other organs, including brain.

It localises to the secreted. In terms of biological role, binds to plexin family members and plays an important role in the regulation of developmental processes. Required for normal cardiovascular development during embryogenesis. Functions as attractant for growing axons, and thereby plays an important role in axon growth and axon guidance. The chain is Semaphorin-3C (SEMA3C) from Homo sapiens (Human).